The sequence spans 286 residues: MQHISVKAFAKINLGLLITGKRQDGYHTLETVFSPINWYDELTFSAADGLGMSCSTIDLPADDSNLCLKAAKALREYAGIDKGVAITLTKRIPFGAGLGGGSSDAATTLRVLNALWELDVPQGDLHGIATGLGADVPYFLETKGLAYATGIGEILEDLEASLPFHIVTVFPGEHISTVWAYRNFYPRFVRQAPDLKQMMKDLCLRSDFSVLPALENDFEPAVFDHYPAVRKVKEQLLEKGGFYASLSGSGSAVFGLFEELRDAENAARFFREHFPVALTEPFFTMQ.

The active site involves lysine 11. 93–103 (PFGAGLGGGSS) is a binding site for ATP. The active site involves aspartate 135.

It belongs to the GHMP kinase family. IspE subfamily.

It carries out the reaction 4-CDP-2-C-methyl-D-erythritol + ATP = 4-CDP-2-C-methyl-D-erythritol 2-phosphate + ADP + H(+). It participates in isoprenoid biosynthesis; isopentenyl diphosphate biosynthesis via DXP pathway; isopentenyl diphosphate from 1-deoxy-D-xylulose 5-phosphate: step 3/6. Functionally, catalyzes the phosphorylation of the position 2 hydroxy group of 4-diphosphocytidyl-2C-methyl-D-erythritol. In Chlorobium phaeobacteroides (strain BS1), this protein is 4-diphosphocytidyl-2-C-methyl-D-erythritol kinase.